Here is a 397-residue protein sequence, read N- to C-terminus: Argininosuccinate synthase (397 aa).

8–16 lines the ATP pocket; sequence AYSGGLDTS. Tyr86 and Ser91 together coordinate L-citrulline. Position 116 (Gly116) interacts with ATP. L-aspartate contacts are provided by Thr118, Asn122, and Asp123. Residue Asn122 coordinates L-citrulline. 5 residues coordinate L-citrulline: Arg126, Ser175, Ser184, Glu260, and Tyr272.

It belongs to the argininosuccinate synthase family. Type 1 subfamily. Homotetramer.

It is found in the cytoplasm. The catalysed reaction is L-citrulline + L-aspartate + ATP = 2-(N(omega)-L-arginino)succinate + AMP + diphosphate + H(+). It functions in the pathway amino-acid biosynthesis; L-arginine biosynthesis; L-arginine from L-ornithine and carbamoyl phosphate: step 2/3. In Clostridium botulinum (strain ATCC 19397 / Type A), this protein is Argininosuccinate synthase.